The sequence spans 629 residues: Phosphoglucomutase, chloroplastic (629 aa).

The transit peptide at 1 to 69 (MSSTYARFDT…SSSSGPIIAG (69 aa)) directs the protein to the chloroplast. 2 residues coordinate alpha-D-glucose 1,6-bisphosphate: Arg94 and Ser187. Ser187 functions as the Phosphoserine intermediate in the catalytic mechanism. Positions 187, 352, 354, and 356 each coordinate Mg(2+). Ser187 bears the Phosphoserine mark. The alpha-D-glucose 1,6-bisphosphate site is built by Asp356, Arg357, Thr420, Glu439, Ser441, and Lys452.

Belongs to the phosphohexose mutase family. Monomer. Requires Mg(2+) as cofactor.

The protein resides in the plastid. The protein localises to the chloroplast. The catalysed reaction is alpha-D-glucose 1-phosphate = alpha-D-glucose 6-phosphate. The enzyme catalyses O-phospho-L-seryl-[protein] + alpha-D-glucose 1-phosphate = alpha-D-glucose 1,6-bisphosphate + L-seryl-[protein]. It carries out the reaction alpha-D-glucose 1,6-bisphosphate + L-seryl-[protein] = O-phospho-L-seryl-[protein] + alpha-D-glucose 6-phosphate. With respect to regulation, inhibited by the Calvin cycle intermediates fructose-1,6-bisphosphate and ribulose-1,5-bisphosphate. Catalyzes the reversible isomerization of alpha-D-glucose 1-phosphate to alpha-D-glucose 6-phosphate. The mechanism proceeds via the intermediate compound alpha-D-glucose 1,6-bisphosphate. This enzyme participates in both the breakdown and synthesis of glucose. This Brassica napus (Rape) protein is Phosphoglucomutase, chloroplastic (PGMP).